Here is a 299-residue protein sequence, read N- to C-terminus: Porphobilinogen deaminase (299 aa).

Cysteine 234 carries the S-(dipyrrolylmethanemethyl)cysteine modification.

Belongs to the HMBS family. Monomer. The cofactor is dipyrromethane.

It catalyses the reaction 4 porphobilinogen + H2O = hydroxymethylbilane + 4 NH4(+). Its pathway is porphyrin-containing compound metabolism; protoporphyrin-IX biosynthesis; coproporphyrinogen-III from 5-aminolevulinate: step 2/4. Tetrapolymerization of the monopyrrole PBG into the hydroxymethylbilane pre-uroporphyrinogen in several discrete steps. This Corynebacterium efficiens (strain DSM 44549 / YS-314 / AJ 12310 / JCM 11189 / NBRC 100395) protein is Porphobilinogen deaminase.